A 141-amino-acid polypeptide reads, in one-letter code: Flagellar assembly factor FliW (141 aa).

This sequence belongs to the FliW family. Interacts with translational regulator CsrA and flagellin(s).

It localises to the cytoplasm. Functionally, acts as an anti-CsrA protein, binds CsrA and prevents it from repressing translation of its target genes, one of which is flagellin. Binds to flagellin and participates in the assembly of the flagellum. The sequence is that of Flagellar assembly factor FliW from Clostridium beijerinckii (strain ATCC 51743 / NCIMB 8052) (Clostridium acetobutylicum).